Consider the following 342-residue polypeptide: 4-hydroxy-2-oxovalerate aldolase 2 (342 aa).

In terms of domain architecture, Pyruvate carboxyltransferase spans 8-260 (ITVHDMTLRD…ETGVDVFKIQ (253 aa)). Substrate is bound at residue 16 to 17 (RD). Residue D17 coordinates Mn(2+). H20 acts as the Proton acceptor in catalysis. Residues S170 and H199 each contribute to the substrate site. Mn(2+) contacts are provided by H199 and H201. Residue Y290 participates in substrate binding.

The protein belongs to the 4-hydroxy-2-oxovalerate aldolase family.

The catalysed reaction is (S)-4-hydroxy-2-oxopentanoate = acetaldehyde + pyruvate. The protein is 4-hydroxy-2-oxovalerate aldolase 2 (mhpE) of Azoarcus sp. (strain BH72).